The sequence spans 348 residues: Protein arginine N-methyltransferase 1 (348 aa).

In terms of domain architecture, SAM-dependent MTase PRMT-type spans 20–322 (EQHYFNSYDH…EKNNRDLNIK (303 aa)). The S-adenosyl-L-methionine site is built by H33, R42, G66, D88, and E117. Catalysis depends on residues E132 and E141.

It belongs to the class I-like SAM-binding methyltransferase superfamily. Protein arginine N-methyltransferase family. As to quaternary structure, homodimer. The dimers can then associate to form a ring-shaped homohexamer. Interacts with NPL3, BRE5, MTR4, SNF2, SUM1, and SSD1.

The protein localises to the nucleus. It carries out the reaction L-arginyl-[protein] + S-adenosyl-L-methionine = N(omega)-methyl-L-arginyl-[protein] + S-adenosyl-L-homocysteine + H(+). The catalysed reaction is L-arginyl-[protein] + 2 S-adenosyl-L-methionine = N(omega),N(omega)-dimethyl-L-arginyl-[protein] + 2 S-adenosyl-L-homocysteine + 2 H(+). Its function is as follows. S-adenosyl-L-methionine-dependent protein-arginine N-methyltransferase that catalyzes both the mono- and asymmetric (type I) dimethylation of the guanidino nitrogens of arginine residues in a variety of RNA-binding proteins such as heterogeneous nuclear ribonucleoproteins (hnRNPs) and small nuclear ribonucleoproteins (snRNPs). Methylates NAB2, NPL3, HRP1 and YRA1, shuttling hnRNPs involved in mRNA processing and export, facilitating their export out of the nucleus. Methylation of NPL3 weakens its interaction with THO2, a component of the TREX (transcription/export) complex important for transcriptional elongation and recruitment of mRNA export factors. Methylates the hnRNP HRB1, but does not influence its subcellular location. Methylates the nucleolar proteins GAR1, NOP1 and NSR1. Methylates the snRNP SNP1 and modulates the cotranscriptional recruitment of splicing factors. Dimethylates free histone H4 (HHF1/HHF2) at 'Arg-4' (H4R3me2a) and plays a role in preservation and establishment of silent chromatin domains. Mono- and dimethylates ribosomal protein S2 (RPS2) at 'Arg-11'. Methylates the catalytic subunit of the SWI/SNF chromatin-remodeling complex SNF2. This Saccharomyces cerevisiae (strain ATCC 204508 / S288c) (Baker's yeast) protein is Protein arginine N-methyltransferase 1.